A 79-amino-acid chain; its full sequence is Cell division protein ZapB (79 aa).

The stretch at 1–78 forms a coiled coil; it reads MSLEALDQLQ…LNSLLGKMDD (78 aa).

The protein belongs to the ZapB family. As to quaternary structure, homodimer. The ends of the coiled-coil dimer bind to each other, forming polymers. Interacts with FtsZ.

The protein localises to the cytoplasm. In terms of biological role, non-essential, abundant cell division factor that is required for proper Z-ring formation. It is recruited early to the divisome by direct interaction with FtsZ, stimulating Z-ring assembly and thereby promoting cell division earlier in the cell cycle. Its recruitment to the Z-ring requires functional FtsA or ZipA. The sequence is that of Cell division protein ZapB from Hamiltonella defensa subsp. Acyrthosiphon pisum (strain 5AT).